Here is a 642-residue protein sequence, read N- to C-terminus: Hemagglutinin-esterase-fusion glycoprotein (642 aa).

Residue A1 is a signal peptide. Positions 2–27 are fusion domain-1; that stretch reads EKIKICLQKQVNSSFSLHNGFGGNLY. Residues 2–617 lie on the Extracellular side of the membrane; the sequence is EKIKICLQKQ…QSDPFYWGSS (616 aa). Disulfide bonds link C7–C570, C107–C152, C127–C175, C197–C239, C216–C303, C224–C276, and C333–C339. N-linked (GlcNAc...) asparagine; by host glycans are attached at residues N13 and N48. Residues 28–138 are esterase domain-1; that stretch reads ATEEKRMFEL…RKNWTDIKLN (111 aa). Catalysis depends on S58, which acts as the Nucleophile. N131 carries N-linked (GlcNAc...) asparagine; by host glycosylation. Residues 138-297 are N-acetyl-9-O-acetylneuraminic acid binding; sequence NFQKSIYELA…VRSSPRFLLM (160 aa). The segment at 298–352 is esterase domain-2; the sequence is PERSYCFDMKEKGLVTAVQSIWGKGRKSDYAVDQACLSTPGCMLIQKQKPYIGEA. Active-site charge relay system residues include D353 and H356. A fusion domain-2 region spans residues 353–638; the sequence is DDHHGDQEMR…AALVISGIAI (286 aa). Residue N382 is glycosylated (N-linked (GlcNAc...) asparagine; by host). The chain crosses the membrane as a helical span at residues 618 to 638; sequence LGLAITTPISLAALVISGIAI. Residues 639 to 642 lie on the Cytoplasmic side of the membrane; it reads CRTK.

It belongs to the influenza type C/coronaviruses hemagglutinin-esterase family. In terms of assembly, homotrimer of disulfide-linked HEF1-HEF2. In terms of processing, in natural infection, inactive HEF is matured into HEF1 and HEF2 outside the cell by one or more trypsin-like, arginine-specific endoprotease.

It is found in the virion membrane. It localises to the host cell membrane. The catalysed reaction is N-acetyl-9-O-acetylneuraminate + H2O = N-acetylneuraminate + acetate + H(+). The enzyme catalyses N-acetyl-4-O-acetylneuraminate + H2O = N-acetylneuraminate + acetate + H(+). Functionally, binds to the N-acetyl-9-O-acetylneuraminic acid residues on the cell surface, bringing about the attachment of the virus particle to the cell. Plays a major role in the determination of host range restriction and virulence. Class I viral fusion protein. Responsible for penetration of the virus into the cell cytoplasm by mediating the fusion of the membrane of the endocytosed virus particle with the endosomal membrane. Low pH in endosomes induce an irreversible conformational change in HEF2, releasing the fusion hydrophobic peptide. Several trimers are required to form a competent fusion pore. Displays a receptor-destroying activity which is a neuraminidate-O-acetyl esterase. This activity cleaves off any receptor on the cell surface, which would otherwise prevent virions release. These cleavages prevent self-aggregation and ensure the efficient spread of the progeny virus from cell to cell. This is Hemagglutinin-esterase-fusion glycoprotein (HE) from Influenza C virus (strain C/Pig/Beijing/439/1982).